A 375-amino-acid polypeptide reads, in one-letter code: Chaperone protein DnaJ (375 aa).

The region spanning 5-70 (DYYDVLGVNR…QKRGAYDQFG (66 aa)) is the J domain. The CR-type zinc finger occupies 135–213 (GCEKQIRIPS…CHGAGQKKTT (79 aa)). Zn(2+) is bound by residues Cys148, Cys151, Cys165, Cys168, Cys187, Cys190, Cys201, and Cys204. CXXCXGXG motif repeat units follow at residues 148–155 (CSTCNGTG), 165–172 (CATCGGHG), 187–194 (CPTCHGTG), and 201–208 (CGSCHGAG).

Belongs to the DnaJ family. As to quaternary structure, homodimer. It depends on Zn(2+) as a cofactor.

It localises to the cytoplasm. Its function is as follows. Participates actively in the response to hyperosmotic and heat shock by preventing the aggregation of stress-denatured proteins and by disaggregating proteins, also in an autonomous, DnaK-independent fashion. Unfolded proteins bind initially to DnaJ; upon interaction with the DnaJ-bound protein, DnaK hydrolyzes its bound ATP, resulting in the formation of a stable complex. GrpE releases ADP from DnaK; ATP binding to DnaK triggers the release of the substrate protein, thus completing the reaction cycle. Several rounds of ATP-dependent interactions between DnaJ, DnaK and GrpE are required for fully efficient folding. Also involved, together with DnaK and GrpE, in the DNA replication of plasmids through activation of initiation proteins. The polypeptide is Chaperone protein DnaJ (Chromobacterium violaceum (strain ATCC 12472 / DSM 30191 / JCM 1249 / CCUG 213 / NBRC 12614 / NCIMB 9131 / NCTC 9757 / MK)).